The following is a 1170-amino-acid chain: Thrombospondin-2 (1170 aa).

The N-terminal stretch at 1-18 (MLWPLLLLALWAWPSAQA) is a signal peptide. The Laminin G-like domain maps to 19–215 (GDQDEDTAFD…LQNVYLVFEN (197 aa)). The segment at 19–232 (GDQDEDTAFD…KKGCQQSQGA (214 aa)) is heparin-binding. 3 N-linked (GlcNAc...) asparagine glycosylation sites follow: Asn-151, Asn-316, and Asn-330. In terms of domain architecture, VWFC spans 318 to 375 (SACWQDGRFFAENETWVVDSCTKCTCKKFKTVCHQISCPPATCADPWFVEGECCPSCV). TSP type-1 domains are found at residues 379–429 (EEGW…GRCD), 435–490 (DGGW…PPCP), and 492–547 (DGRW…KSCP). Cystine bridges form between Cys-391/Cys-423, Cys-395/Cys-428, Cys-406/Cys-413, Cys-447/Cys-484, Cys-451/Cys-489, Cys-462/Cys-474, Cys-504/Cys-541, Cys-508/Cys-546, Cys-519/Cys-531, Cys-551/Cys-562, Cys-556/Cys-572, Cys-575/Cys-586, Cys-592/Cys-608, Cys-599/Cys-617, Cys-620/Cys-644, Cys-650/Cys-663, Cys-657/Cys-676, Cys-678/Cys-689, Cys-705/Cys-713, Cys-718/Cys-738, Cys-754/Cys-774, Cys-777/Cys-797, Cys-813/Cys-833, Cys-836/Cys-856, Cys-874/Cys-894, and Cys-910/Cys-930. Asn-455 is a glycosylation site (N-linked (GlcNAc...) asparagine). Residues 547–587 (PIDGCLSNPCFPGAECSSFPDGSWSCGSCPGGFLGNGTHCE) enclose the EGF-like 1 domain. The N-linked (GlcNAc...) asparagine glycan is linked to Asn-582. An EGF-like 2 domain is found at 646 to 690 (PENPCKDKTHSCHRHAECIYLGHFSDPMYKCECQTGYAGDGLICG). TSP type-3 repeat units lie at residues 691–726 (EDSDLDGWPNKNLVCATNATYHCVKDNCPLLPNSGQ), 727–762 (EDFDKDGIGDACDDDDDNDGVSDEKDNCQLLFNPRQ), 763–785 (FDYDKDEVGDRCDNCPYVHNPAQ), 786–821 (IDTDNNGEGDACSVDIDGDDVFNERDNCPYVYNTDQ), 822–844 (RDTDGDGVGDHCDNCPLVHNPDQ), 845–882 (TDVDNDLVGDQCDNNEDIDEDGHQNNQDNCPHIPNANQ), 883–918 (ADHDRDGQGDACDSDDDNDGIPDDRDNCRLVANPDQ), and 919–954 (EDSDGDRRGDACKDDFDNDSIPDIDDVCPENNAISE). Residue Asn-708 is glycosylated (N-linked (GlcNAc...) asparagine). Residues 731–750 (KDGIGDACDDDDDNDGVSDE) form a disordered region. Residues 737–747 (ACDDDDDNDGV) are compositionally biased toward acidic residues. The disordered stretch occupies residues 841 to 944 (NPDQTDVDND…DNDSIPDIDD (104 aa)). 2 stretches are compositionally biased toward acidic residues: residues 845–864 (TDVDNDLVGDQCDNNEDIDE) and 894–903 (CDSDDDNDGI). The segment covering 923-933 (GDRRGDACKDD) has biased composition (basic and acidic residues). Residues 926-928 (RGD) carry the Cell attachment site motif. Residues 934-944 (FDNDSIPDIDD) show a composition bias toward acidic residues. N-linked (GlcNAc...) asparagine glycosylation is found at Asn-936 and Asn-1067. A disulfide bond links Cys-946 and Cys-1167. One can recognise a TSP C-terminal domain in the interval 958–1170 (RNFQMVHLDP…SDLKYECRDV (213 aa)).

It belongs to the thrombospondin family. In terms of assembly, homotrimer; disulfide-linked. Can bind to fibrinogen, fibronectin, laminin and type V collagen. Interacts (via the TSP type I repeats) with CD36; the interaction conveys an antiangiogenic effect. Interacts (via the TSP type I repeats) with HRG; the interaction blocks the antiangiogenic effect of THBS2 with CD36.

Adhesive glycoprotein that mediates cell-to-cell and cell-to-matrix interactions. Ligand for CD36 mediating antiangiogenic properties. The sequence is that of Thrombospondin-2 (THBS2) from Bos taurus (Bovine).